Reading from the N-terminus, the 470-residue chain is Cysteine--tRNA ligase (470 aa).

Zn(2+) is bound at residue cysteine 27. The 'HIGH' region signature appears at 29–39 (PTVYNFFHIGN). 3 residues coordinate Zn(2+): cysteine 211, histidine 236, and glutamate 240. Residues 268–272 (KMSKS) carry the 'KMSKS' region motif. Residue lysine 271 coordinates ATP.

Belongs to the class-I aminoacyl-tRNA synthetase family. Monomer. The cofactor is Zn(2+).

The protein localises to the cytoplasm. The enzyme catalyses tRNA(Cys) + L-cysteine + ATP = L-cysteinyl-tRNA(Cys) + AMP + diphosphate. The sequence is that of Cysteine--tRNA ligase from Clostridium botulinum (strain Alaska E43 / Type E3).